Here is a 145-residue protein sequence, read N- to C-terminus: ATP synthase epsilon chain (145 aa).

It belongs to the ATPase epsilon chain family. F-type ATPases have 2 components, CF(1) - the catalytic core - and CF(0) - the membrane proton channel. CF(1) has five subunits: alpha(3), beta(3), gamma(1), delta(1), epsilon(1). CF(0) has three main subunits: a, b and c.

The protein localises to the cell inner membrane. Its function is as follows. Produces ATP from ADP in the presence of a proton gradient across the membrane. This Francisella tularensis subsp. mediasiatica (strain FSC147) protein is ATP synthase epsilon chain.